Reading from the N-terminus, the 171-residue chain is 3-hydroxydecanoyl-[acyl-carrier-protein] dehydratase (171 aa).

Histidine 71 is a catalytic residue.

Belongs to the thioester dehydratase family. FabA subfamily. Homodimer.

The protein localises to the cytoplasm. It carries out the reaction a (3R)-hydroxyacyl-[ACP] = a (2E)-enoyl-[ACP] + H2O. It catalyses the reaction (3R)-hydroxydecanoyl-[ACP] = (2E)-decenoyl-[ACP] + H2O. The enzyme catalyses (2E)-decenoyl-[ACP] = (3Z)-decenoyl-[ACP]. It functions in the pathway lipid metabolism; fatty acid biosynthesis. In terms of biological role, necessary for the introduction of cis unsaturation into fatty acids. Catalyzes the dehydration of (3R)-3-hydroxydecanoyl-ACP to E-(2)-decenoyl-ACP and then its isomerization to Z-(3)-decenoyl-ACP. Can catalyze the dehydratase reaction for beta-hydroxyacyl-ACPs with saturated chain lengths up to 16:0, being most active on intermediate chain length. In Rhizobium rhizogenes (strain K84 / ATCC BAA-868) (Agrobacterium radiobacter), this protein is 3-hydroxydecanoyl-[acyl-carrier-protein] dehydratase.